Reading from the N-terminus, the 354-residue chain is Phosphatidylserine decarboxylase proenzyme (354 aa).

A helical transmembrane segment spans residues 18 to 36 (YLITGVTILSFILMFQYKY). Active-site charge relay system; for autoendoproteolytic cleavage activity residues include aspartate 139, histidine 198, and serine 308. Catalysis depends on serine 308, which acts as the Schiff-base intermediate with substrate; via pyruvic acid; for decarboxylase activity. Serine 308 is subject to Pyruvic acid (Ser); by autocatalysis.

It belongs to the phosphatidylserine decarboxylase family. PSD-B subfamily. Eukaryotic type I sub-subfamily. Heterodimer of a large membrane-associated beta subunit and a small pyruvoyl-containing alpha subunit. Pyruvate serves as cofactor. Post-translationally, is synthesized initially as an inactive proenzyme. Formation of the active enzyme involves a self-maturation process in which the active site pyruvoyl group is generated from an internal serine residue via an autocatalytic post-translational modification. Two non-identical subunits are generated from the proenzyme in this reaction, and the pyruvate is formed at the N-terminus of the alpha chain, which is derived from the carboxyl end of the proenzyme. The autoendoproteolytic cleavage occurs by a canonical serine protease mechanism, in which the side chain hydroxyl group of the serine supplies its oxygen atom to form the C-terminus of the beta chain, while the remainder of the serine residue undergoes an oxidative deamination to produce ammonia and the pyruvoyl prosthetic group on the alpha chain. During this reaction, the Ser that is part of the protease active site of the proenzyme becomes the pyruvoyl prosthetic group, which constitutes an essential element of the active site of the mature decarboxylase.

Its subcellular location is the membrane. The protein localises to the endoplasmic reticulum membrane. The enzyme catalyses a 1,2-diacyl-sn-glycero-3-phospho-L-serine + H(+) = a 1,2-diacyl-sn-glycero-3-phosphoethanolamine + CO2. The protein operates within phospholipid metabolism; phosphatidylethanolamine biosynthesis; phosphatidylethanolamine from CDP-diacylglycerol: step 2/2. With respect to regulation, protease activity is inhibited by PMSF. Its function is as follows. Catalyzes the formation of phosphatidylethanolamine (PtdEtn) from phosphatidylserine (PtdSer). Plays a central role in phospholipid metabolism and in the interorganelle trafficking of phosphatidylserine. This Plasmodium knowlesi (strain H) protein is Phosphatidylserine decarboxylase proenzyme.